Here is a 163-residue protein sequence, read N- to C-terminus: Probable cyclic pyranopterin monophosphate synthase (163 aa).

Residues 1–23 (MPDGDDDALTHTTADGDAQMVDV) form a disordered region. Substrate contacts are provided by residues 80-82 (MCH) and 116-117 (ME). Asp131 is an active-site residue.

Belongs to the MoaC family. As to quaternary structure, homohexamer; trimer of dimers.

The catalysed reaction is (8S)-3',8-cyclo-7,8-dihydroguanosine 5'-triphosphate = cyclic pyranopterin phosphate + diphosphate. It participates in cofactor biosynthesis; molybdopterin biosynthesis. Catalyzes the conversion of (8S)-3',8-cyclo-7,8-dihydroguanosine 5'-triphosphate to cyclic pyranopterin monophosphate (cPMP). In Halobacterium salinarum (strain ATCC 29341 / DSM 671 / R1), this protein is Probable cyclic pyranopterin monophosphate synthase.